A 356-amino-acid chain; its full sequence is Probable farnesyl diphosphate synthase DDB_G0278823 (356 aa).

Residues lysine 55, arginine 58, and glutamine 94 each contribute to the isopentenyl diphosphate site. Positions 101 and 105 each coordinate Mg(2+). Residue arginine 110 participates in dimethylallyl diphosphate binding. Arginine 111 provides a ligand contact to isopentenyl diphosphate. Dimethylallyl diphosphate-binding residues include lysine 203, threonine 204, glutamine 243, lysine 260, and lysine 269.

Belongs to the FPP/GGPP synthase family. The cofactor is Mg(2+).

The protein localises to the cytoplasm. It catalyses the reaction isopentenyl diphosphate + dimethylallyl diphosphate = (2E)-geranyl diphosphate + diphosphate. It carries out the reaction isopentenyl diphosphate + (2E)-geranyl diphosphate = (2E,6E)-farnesyl diphosphate + diphosphate. It functions in the pathway isoprenoid biosynthesis; farnesyl diphosphate biosynthesis; farnesyl diphosphate from geranyl diphosphate and isopentenyl diphosphate: step 1/1. The protein operates within isoprenoid biosynthesis; geranyl diphosphate biosynthesis; geranyl diphosphate from dimethylallyl diphosphate and isopentenyl diphosphate: step 1/1. With respect to regulation, inhibited by aminobisphosphonate drugs (aBP), such as risedronate and alendronate. Key enzyme in isoprenoid biosynthesis which catalyzes the formation of farnesyl diphosphate (FPP), a sterol precursor. This Dictyostelium discoideum (Social amoeba) protein is Probable farnesyl diphosphate synthase DDB_G0278823.